We begin with the raw amino-acid sequence, 126 residues long: Protein ApaG (126 aa).

Positions 2–126 (SDSRYKVDVS…FRLAVPGSLH (125 aa)) constitute an ApaG domain.

This Pseudomonas syringae pv. tomato (strain ATCC BAA-871 / DC3000) protein is Protein ApaG.